Here is a 162-residue protein sequence, read N- to C-terminus: Nucleotide-binding protein Franean1_6074 (162 aa).

This sequence belongs to the YajQ family.

Nucleotide-binding protein. The chain is Nucleotide-binding protein Franean1_6074 from Parafrankia sp. (strain EAN1pec).